The chain runs to 318 residues: 2-keto-3-deoxygluconate permease (318 aa).

A run of 10 helical transmembrane segments spans residues 10–30, 42–62, 82–102, 109–129, 139–159, 163–183, 201–221, 224–244, 257–277, and 289–309; these read LPGG…TLWP, GLIS…GATI, IAVA…GGVS, LSVL…YAAL, AGAV…LILG, LASF…LGFA, TLVP…TIAH, TSGV…LLLA, VAAS…AGMA, and ALVA…TALY.

This sequence belongs to the KdgT transporter family.

It is found in the cell inner membrane. It carries out the reaction 2-dehydro-3-deoxy-D-gluconate(in) + H(+)(in) = 2-dehydro-3-deoxy-D-gluconate(out) + H(+)(out). Catalyzes the proton-dependent uptake of 2-keto-3-deoxygluconate (KDG) into the cell. In Xanthomonas axonopodis pv. citri (strain 306), this protein is 2-keto-3-deoxygluconate permease.